A 635-amino-acid chain; its full sequence is GTPase-GDP dissociation stimulator vimar (635 aa).

ARM repeat units lie at residues 72–118 (KSEV…NICY), 346–391 (TDSH…NLVI), 392–432 (PKPN…MTVD), and 510–550 (RSSL…ILSV).

Interacts with Miro.

The protein resides in the endoplasmic reticulum. The protein localises to the mitochondrion. It is found in the cytoplasm. It localises to the cytosol. Probably acts as a GEF (guanine nucleotide exchange factor) for the Rho family of small GTP-binding proteins (G proteins) that stimulates the dissociation of GDP to enable subsequent binding of GTP. May also chaperone the processing and/or trafficking of small GTPases independently of GEF activity. By interacting with Miro, promotes mitochondrial fission in response to high calcium concentrations. This chain is GTPase-GDP dissociation stimulator vimar, found in Drosophila melanogaster (Fruit fly).